A 215-amino-acid chain; its full sequence is Probable transaldolase (215 aa).

The active-site Schiff-base intermediate with substrate is Lys-83.

Belongs to the transaldolase family. Type 3B subfamily.

The protein resides in the cytoplasm. It catalyses the reaction D-sedoheptulose 7-phosphate + D-glyceraldehyde 3-phosphate = D-erythrose 4-phosphate + beta-D-fructose 6-phosphate. It participates in carbohydrate degradation; pentose phosphate pathway; D-glyceraldehyde 3-phosphate and beta-D-fructose 6-phosphate from D-ribose 5-phosphate and D-xylulose 5-phosphate (non-oxidative stage): step 2/3. Transaldolase is important for the balance of metabolites in the pentose-phosphate pathway. The sequence is that of Probable transaldolase from Anaeromyxobacter sp. (strain Fw109-5).